Consider the following 183-residue polypeptide: Putative 3-methyladenine DNA glycosylase (183 aa).

This sequence belongs to the DNA glycosylase MPG family.

This is Putative 3-methyladenine DNA glycosylase from Rickettsia rickettsii (strain Iowa).